The chain runs to 227 residues: Cytochrome c oxidase subunit 2 (227 aa).

Over 1–14 (MAYPFQLGFQDATS) the chain is Mitochondrial intermembrane. A helical transmembrane segment spans residues 15–45 (PIMEELLHFHDHTLMIVFLISSLVLYIISSM). Topologically, residues 46 to 59 (LTTKLTHTSTMDAQ) are mitochondrial matrix. Residues 60-87 (EVETIWTILPAIILILIALPSLRILYMM) traverse the membrane as a helical segment. At 88–227 (DEINNPSLTV…YFEEWSASML (140 aa)) the chain is on the mitochondrial intermembrane side. Residues H161, C196, E198, C200, H204, and M207 each coordinate Cu cation. Position 198 (E198) interacts with Mg(2+).

It belongs to the cytochrome c oxidase subunit 2 family. Component of the cytochrome c oxidase (complex IV, CIV), a multisubunit enzyme composed of 14 subunits. The complex is composed of a catalytic core of 3 subunits MT-CO1, MT-CO2 and MT-CO3, encoded in the mitochondrial DNA, and 11 supernumerary subunits COX4I, COX5A, COX5B, COX6A, COX6B, COX6C, COX7A, COX7B, COX7C, COX8 and NDUFA4, which are encoded in the nuclear genome. The complex exists as a monomer or a dimer and forms supercomplexes (SCs) in the inner mitochondrial membrane with NADH-ubiquinone oxidoreductase (complex I, CI) and ubiquinol-cytochrome c oxidoreductase (cytochrome b-c1 complex, complex III, CIII), resulting in different assemblies (supercomplex SCI(1)III(2)IV(1) and megacomplex MCI(2)III(2)IV(2)). Found in a complex with TMEM177, COA6, COX18, COX20, SCO1 and SCO2. Interacts with TMEM177 in a COX20-dependent manner. Interacts with COX20. Interacts with COX16. It depends on Cu cation as a cofactor.

It is found in the mitochondrion inner membrane. The catalysed reaction is 4 Fe(II)-[cytochrome c] + O2 + 8 H(+)(in) = 4 Fe(III)-[cytochrome c] + 2 H2O + 4 H(+)(out). In terms of biological role, component of the cytochrome c oxidase, the last enzyme in the mitochondrial electron transport chain which drives oxidative phosphorylation. The respiratory chain contains 3 multisubunit complexes succinate dehydrogenase (complex II, CII), ubiquinol-cytochrome c oxidoreductase (cytochrome b-c1 complex, complex III, CIII) and cytochrome c oxidase (complex IV, CIV), that cooperate to transfer electrons derived from NADH and succinate to molecular oxygen, creating an electrochemical gradient over the inner membrane that drives transmembrane transport and the ATP synthase. Cytochrome c oxidase is the component of the respiratory chain that catalyzes the reduction of oxygen to water. Electrons originating from reduced cytochrome c in the intermembrane space (IMS) are transferred via the dinuclear copper A center (CU(A)) of subunit 2 and heme A of subunit 1 to the active site in subunit 1, a binuclear center (BNC) formed by heme A3 and copper B (CU(B)). The BNC reduces molecular oxygen to 2 water molecules using 4 electrons from cytochrome c in the IMS and 4 protons from the mitochondrial matrix. The protein is Cytochrome c oxidase subunit 2 (MT-CO2) of Equus asinus (Donkey).